The following is an 872-amino-acid chain: F-box protein pof6 (872 aa).

In terms of domain architecture, F-box spans 30-75 (FGCLTINIYLKIFTLISTPDLCNCRLVCRKFQQLCDYNSIYVKKLL). Residues 101 to 122 (MSSNTSKGFHLQSSDKKYADSD) form a disordered region. A compositionally biased stretch (basic and acidic residues) spans 113 to 122 (SSDKKYADSD).

In terms of assembly, interacts with skp1. Forms a complex with pof6 and skp1.

The protein resides in the cytoplasm. The protein localises to the nucleus. In terms of biological role, together with skp1, essential for septum processing and cell separation. The protein is F-box protein pof6 (pof6) of Schizosaccharomyces pombe (strain 972 / ATCC 24843) (Fission yeast).